Here is a 656-residue protein sequence, read N- to C-terminus: Methylenetetrahydrofolate reductase (NADPH) (656 aa).

A compositionally biased stretch (polar residues) spans 1-12; the sequence is MVNEARGNSSLN. The interval 1-44 is disordered; sequence MVNEARGNSSLNPCLEGSASSGSESSKDSSRCSTPGLDPERHER. 10 positions are modified to phosphoserine: Ser9, Ser10, Ser18, Ser20, Ser21, Ser23, Ser25, Ser26, Ser29, and Ser30. Thr34 is modified (phosphothreonine). Glu63 functions as the Proton donor/acceptor in the catalytic mechanism. 63–68 provides a ligand contact to NAD(+); that stretch reads EFFPPR. At Tyr90 the chain carries Phosphotyrosine. Thr94 carries the post-translational modification Phosphothreonine. 94 to 95 contributes to the NAD(+) binding site; that stretch reads TW. 94–95 contacts FAD; that stretch reads TW. Ser103 is modified (phosphoserine). FAD contacts are provided by residues His127, 157-159, 174-175, Tyr197, 201-204, Asp210, and Lys217; these read RGD, YA, and HPEA. Asp159 provides a ligand contact to substrate. Positions 228, 321, and 325 each coordinate substrate. Ser394 carries the post-translational modification Phosphoserine. Residue Thr451 is modified to Phosphothreonine. S-adenosyl-L-methionine is bound by residues Asn456, 461–464, 481–485, Thr560, and Thr573; these read AAET and TINSQ.

The protein belongs to the methylenetetrahydrofolate reductase family. As to quaternary structure, homodimer. FAD serves as cofactor. Phosphorylation of an N-terminal serine-rich phosphorylation region increases sensitivity to S-adenosylmethionine and inhibition.

It carries out the reaction (6S)-5-methyl-5,6,7,8-tetrahydrofolate + NADP(+) = (6R)-5,10-methylene-5,6,7,8-tetrahydrofolate + NADPH + H(+). The protein operates within one-carbon metabolism; tetrahydrofolate interconversion. Allosterically regulated by S-adenosylmethionine (SAM). Functionally, catalyzes the conversion of 5,10-methylenetetrahydrofolate to 5-methyltetrahydrofolate, a cosubstrate for homocysteine remethylation to methionine. Represents a key regulatory connection between the folate and methionine cycles. In Homo sapiens (Human), this protein is Methylenetetrahydrofolate reductase (NADPH).